Here is a 272-residue protein sequence, read N- to C-terminus: Putative hydro-lyase RPB_3621 (272 aa).

This sequence belongs to the D-glutamate cyclase family.

This chain is Putative hydro-lyase RPB_3621, found in Rhodopseudomonas palustris (strain HaA2).